We begin with the raw amino-acid sequence, 614 residues long: 2-succinyl-5-enolpyruvyl-6-hydroxy-3-cyclohexene-1-carboxylate synthase (614 aa).

The protein belongs to the TPP enzyme family. MenD subfamily. As to quaternary structure, homodimer. Mg(2+) is required as a cofactor. The cofactor is Mn(2+). Thiamine diphosphate serves as cofactor.

It carries out the reaction isochorismate + 2-oxoglutarate + H(+) = 5-enolpyruvoyl-6-hydroxy-2-succinyl-cyclohex-3-ene-1-carboxylate + CO2. It functions in the pathway quinol/quinone metabolism; 1,4-dihydroxy-2-naphthoate biosynthesis; 1,4-dihydroxy-2-naphthoate from chorismate: step 2/7. It participates in quinol/quinone metabolism; menaquinone biosynthesis. Its function is as follows. Catalyzes the thiamine diphosphate-dependent decarboxylation of 2-oxoglutarate and the subsequent addition of the resulting succinic semialdehyde-thiamine pyrophosphate anion to isochorismate to yield 2-succinyl-5-enolpyruvyl-6-hydroxy-3-cyclohexene-1-carboxylate (SEPHCHC). The protein is 2-succinyl-5-enolpyruvyl-6-hydroxy-3-cyclohexene-1-carboxylate synthase of Sorangium cellulosum (strain So ce56) (Polyangium cellulosum (strain So ce56)).